The sequence spans 320 residues: Ferrochelatase (320 aa).

Fe cation-binding residues include histidine 194 and glutamate 275.

The protein belongs to the ferrochelatase family.

Its subcellular location is the cytoplasm. The catalysed reaction is heme b + 2 H(+) = protoporphyrin IX + Fe(2+). Its pathway is porphyrin-containing compound metabolism; protoheme biosynthesis; protoheme from protoporphyrin-IX: step 1/1. Catalyzes the ferrous insertion into protoporphyrin IX. The chain is Ferrochelatase from Vibrio cholerae serotype O1 (strain ATCC 39315 / El Tor Inaba N16961).